The chain runs to 232 residues: Ubiquinone biosynthesis O-methyltransferase (232 aa).

S-adenosyl-L-methionine-binding residues include R36, G55, D76, and M120.

Belongs to the methyltransferase superfamily. UbiG/COQ3 family.

The catalysed reaction is a 3-demethylubiquinol + S-adenosyl-L-methionine = a ubiquinol + S-adenosyl-L-homocysteine + H(+). It carries out the reaction a 3-(all-trans-polyprenyl)benzene-1,2-diol + S-adenosyl-L-methionine = a 2-methoxy-6-(all-trans-polyprenyl)phenol + S-adenosyl-L-homocysteine + H(+). It functions in the pathway cofactor biosynthesis; ubiquinone biosynthesis. In terms of biological role, O-methyltransferase that catalyzes the 2 O-methylation steps in the ubiquinone biosynthetic pathway. This chain is Ubiquinone biosynthesis O-methyltransferase, found in Burkholderia vietnamiensis (strain G4 / LMG 22486) (Burkholderia cepacia (strain R1808)).